Reading from the N-terminus, the 153-residue chain is UPF0756 membrane protein BCQ_4399 (153 aa).

The next 4 membrane-spanning stretches (helical) occupy residues 8–28 (FLFI…TVAI), 54–74 (LGVT…EIGF), 87–107 (WIAL…VQLL), and 117–137 (LVFG…GPLI).

This sequence belongs to the UPF0756 family.

The protein localises to the cell membrane. The sequence is that of UPF0756 membrane protein BCQ_4399 from Bacillus cereus (strain Q1).